Here is a 201-residue protein sequence, read N- to C-terminus: Recombination protein RecR (201 aa).

The C4-type zinc-finger motif lies at 57-72 (CSDCRTFTEQDVCAIC). In terms of domain architecture, Toprim spans 81–176 (GLVCVVESPA…MASRIAHGVP (96 aa)).

The protein belongs to the RecR family.

May play a role in DNA repair. It seems to be involved in an RecBC-independent recombinational process of DNA repair. It may act with RecF and RecO. In Pectobacterium atrosepticum (strain SCRI 1043 / ATCC BAA-672) (Erwinia carotovora subsp. atroseptica), this protein is Recombination protein RecR.